The chain runs to 232 residues: Demethylmenaquinone methyltransferase (232 aa).

S-adenosyl-L-methionine contacts are provided by residues Thr-58, Asp-79, and 104-105 (NA).

This sequence belongs to the class I-like SAM-binding methyltransferase superfamily. MenG/UbiE family.

It catalyses the reaction a 2-demethylmenaquinol + S-adenosyl-L-methionine = a menaquinol + S-adenosyl-L-homocysteine + H(+). Its pathway is quinol/quinone metabolism; menaquinone biosynthesis; menaquinol from 1,4-dihydroxy-2-naphthoate: step 2/2. Methyltransferase required for the conversion of demethylmenaquinol (DMKH2) to menaquinol (MKH2). The sequence is that of Demethylmenaquinone methyltransferase from Bacillus licheniformis (strain ATCC 14580 / DSM 13 / JCM 2505 / CCUG 7422 / NBRC 12200 / NCIMB 9375 / NCTC 10341 / NRRL NRS-1264 / Gibson 46).